Here is a 1249-residue protein sequence, read N- to C-terminus: Calmodulin-regulated spectrin-associated protein 3 (1249 aa).

7 disordered regions span residues 183–205 (KTEQ…APAQ), 328–385 (PDGH…SMSH), 430–457 (VSSD…GDLP), 473–609 (LLPD…RLEE), 632–696 (LGKS…HEGL), 714–1029 (QRDM…SALA), and 1061–1111 (NNLG…TGPR). T184 is modified (phosphothreonine). The segment covering 189–205 (AQRASPAAPADGAAPAQ) has biased composition (low complexity). At S193 the chain carries Phosphoserine. Residues 203 to 312 (PAQPSIRYRK…LVVMLAELFM (110 aa)) form the Calponin-homology (CH) domain. Phosphoserine is present on residues S334, S341, S347, S351, S368, S373, and S382. Positions 341–352 (SPPQNNSGSSSP) are enriched in low complexity. Residues 364-383 (GGPQSPLRGSTGSLKSSPSM) show a composition bias toward polar residues. Residues 437 to 454 (PPRPAPARTPTQPPPEPG) are compositionally biased toward pro residues. Phosphoserine is present on residues S547, S554, and S560. Basic and acidic residues predominate over residues 568-579 (AERKKQLVKAEA). Positions 594–604 (EALSSEMSELS) are enriched in low complexity. Positions 594–628 (EALSSEMSELSARLEEKRRAIEAQKRRIEAIFAKH) form a coiled coil. Over residues 647 to 657 (GEAEAEAEEAD) the composition is skewed to acidic residues. S685 carries the post-translational modification Phosphoserine. Residues 696–729 (LGEYNRAVSKLSAALSSLQRDMQRLTDQQQRLLA) adopt a coiled-coil conformation. A compositionally biased stretch (pro residues) spans 731 to 741 (PEAPGSAPPPA). The segment covering 754–779 (AASPSPARRVPATRRSPGPGPSQSPR) has biased composition (low complexity). Phosphoserine is present on S769. Residue T799 is modified to Phosphothreonine. S814 carries the post-translational modification Phosphoserine. The segment covering 814 to 825 (SPSQVPVQTRSS) has biased composition (polar residues). The segment covering 889–940 (YKDEDKPEDEMAQKRASLLERQQRRAEEARRRKQWQEVEKEQRREEAARLAQ) has biased composition (basic and acidic residues). Residues 896–935 (EDEMAQKRASLLERQQRRAEEARRRKQWQEVEKEQRREEA) are a coiled coil. Residues 950–964 (VSAVPMATPAPAARA) show a composition bias toward low complexity. The span at 970–998 (VGPRKGDFTRQEYERRAQLKLMDDLDKVL) shows a compositional bias: basic and acidic residues. S1074 carries the post-translational modification Phosphoserine. The CKK domain occupies 1109–1243 (GPRLYKEPSA…QGKKPTTPKK (135 aa)).

Belongs to the CAMSAP1 family. As to quaternary structure, interacts with PLEKHA7. Interacts with CAMSAP2. Interacts with KATNA1 and KATNB1; leading to regulate the length of CAMSAP3-decorated microtubule stretches. Interacts with AKAP9; regulating Golgi assembly in epithelial cells. Interacts with MACF1. Interacts with AKNA.

The protein resides in the cytoplasm. It is found in the cytoskeleton. It localises to the cell junction. Its subcellular location is the adherens junction. The protein localises to the cilium axoneme. The protein resides in the cilium basal body. Key microtubule-organizing protein that specifically binds the minus-end of non-centrosomal microtubules and regulates their dynamics and organization. Specifically recognizes growing microtubule minus-ends and autonomously decorates and stabilizes microtubule lattice formed by microtubule minus-end polymerization. Acts on free microtubule minus-ends that are not capped by microtubule-nucleating proteins or other factors and protects microtubule minus-ends from depolymerization. In addition, it also reduces the velocity of microtubule polymerization. Required for the biogenesis and the maintenance of zonula adherens by anchoring the minus-end of microtubules to zonula adherens and by recruiting the kinesin KIFC3 to those junctional sites. Required for orienting the apical-to-basal polarity of microtubules in epithelial cells: acts by tethering non-centrosomal microtubules to the apical cortex, leading to their longitudinal orientation. Plays a key role in early embryos, which lack centrosomes: accumulates at the microtubule bridges that connect pairs of cells and enables the formation of a non-centrosomal microtubule-organizing center that directs intracellular transport in the early embryo. Couples non-centrosomal microtubules with actin: interaction with MACF1 at the minus ends of non-centrosomal microtubules, tethers the microtubules to actin filaments, regulating focal adhesion size and cell migration. Plays a key role in the generation of non-centrosomal microtubules by accumulating in the pericentrosomal region and cooperating with KATNA1 to release non-centrosomal microtubules from the centrosome. Through the microtubule cytoskeleton, also regulates the organization of cellular organelles including the Golgi and the early endosomes. Through interaction with AKAP9, involved in translocation of Golgi vesicles in epithelial cells, where microtubules are mainly non-centrosomal. Plays an important role in motile cilia function by facilitatating proper orientation of basal bodies and formation of central microtubule pairs in motile cilia. In Homo sapiens (Human), this protein is Calmodulin-regulated spectrin-associated protein 3.